A 307-amino-acid chain; its full sequence is Putative serine/threonine-protein phosphatase C22H10.04 (307 aa).

Positions 51, 53, 79, and 111 each coordinate Mn(2+). Catalysis depends on His112, which acts as the Proton donor. Positions 161 and 236 each coordinate Mn(2+).

It belongs to the PPP phosphatase family. PP-X subfamily. Mn(2+) is required as a cofactor.

The catalysed reaction is O-phospho-L-seryl-[protein] + H2O = L-seryl-[protein] + phosphate. It catalyses the reaction O-phospho-L-threonyl-[protein] + H2O = L-threonyl-[protein] + phosphate. The protein is Putative serine/threonine-protein phosphatase C22H10.04 of Schizosaccharomyces pombe (strain 972 / ATCC 24843) (Fission yeast).